The primary structure comprises 778 residues: DEK domain-containing chromatin-associated protein 4 (778 aa).

Disordered stretches follow at residues 1 to 334 (MGEE…RPVR) and 475 to 689 (LVNE…PSDE). The span at 14 to 26 (ANGTSSLQKTSDA) shows a compositional bias: polar residues. 4 stretches are compositionally biased toward basic and acidic residues: residues 40–95 (EVQE…PEAD), 121–153 (AVMK…KLEG), 165–185 (EEKL…KVEN), and 209–243 (TNKG…TESK). A coiled-coil region spans residues 191–300 (KEEALKEKNE…KEDIKKSNKR (110 aa)). The segment covering 244-286 (DENEDKEEEKEDEKEESMDDKEDEKEESNDDDKEDEKEESNDD) has biased composition (acidic residues). 2 stretches are compositionally biased toward basic and acidic residues: residues 287 to 296 (KEDKKEDIKK) and 303 to 323 (GKTE…DIEP). Residues 289-296 (DKKEDIKK) carry the Nuclear localization signal 1 motif. Residues 489–496 (PKKSSPAA) carry the Nuclear localization signal 2 motif. Residues 491–502 (KSSPAAGSSSSK) are compositionally biased toward low complexity. A coiled-coil region spans residues 526–587 (DDESEEEKED…EESEEETKKK (62 aa)). Acidic residues-rich tracts occupy residues 527–553 (DESE…EENE) and 560–582 (SEDE…ESEE). The Nuclear localization signal 3 signature appears at 618-625 (PKKATQKR). Basic residues predominate over residues 621–631 (ATQKRSAGKRK). Basic and acidic residues predominate over residues 678 to 689 (KGKDKNKEPSDE). Residues 685–740 (EPSDEELKTAIIDILKGVDFNTATFTDILKRLDAKFNISLASKKSSIKRMIQDELT) form the DEK-C domain. 2 consecutive DNA-binding regions follow at residues 703–717 (DFNT…KRLD) and 732–736 (KRMIQ). The stretch at 732–766 (KRMIQDELTKLADEAEDEEGEEEDAEHEEEEEKEK) forms a coiled coil. Residues 741–778 (KLADEAEDEEGEEEDAEHEEEEEKEKAKGSGGGEEVKA) are disordered. The segment covering 745-763 (EAEDEEGEEEDAEHEEEEE) has biased composition (acidic residues). Residues 764–778 (KEKAKGSGGGEEVKA) are compositionally biased toward basic and acidic residues.

As to quaternary structure, interacts with DEK3.

Its subcellular location is the nucleus. The protein localises to the nucleolus. Its function is as follows. Chromatin-associated protein which contributes to the modulation of chromatin structure (such as super-helical structure of DNA) and function. Binds to chromatin of protein-coding genes throughout the genome to regulate nucleosome occupancy and chromatin accessibility, and to modulate the expression of target genes. The protein is DEK domain-containing chromatin-associated protein 4 of Arabidopsis thaliana (Mouse-ear cress).